An 881-amino-acid polypeptide reads, in one-letter code: Squamosa promoter-binding-like protein 1 (881 aa).

The segment at 49–69 is disordered; that stretch reads FPLGNSSNSSSSCSDEGNDKK. The span at 53–62 shows a compositional bias: low complexity; that stretch reads NSSNSSSSCS. A sufficient and necessary for DNA binding region spans residues 96–187; it reads PAKKTKSGAV…RKTNPEPGAN (92 aa). Residues 103–180 form an SBP-type zinc finger; the sequence is GAVCQVENCE…AGHNKRRRKT (78 aa). Zn(2+)-binding residues include Cys106, Cys111, Cys128, His131, Cys147, Cys150, His154, and Cys166. The short motif at 163 to 179 is the Bipartite nuclear localization signal element; that stretch reads KRSCRRRLAGHNKRRRK. The span at 170–179 shows a compositional bias: basic residues; that stretch reads LAGHNKRRRK. Disordered stretches follow at residues 170–193 and 274–358; these read LAGH…PSDD and FSAR…EDAQ. Polar residues predominate over residues 275 to 284; it reads SARQDGTATE. Positions 285 to 295 are enriched in basic and acidic residues; it reads NRSEKQVKMND. A compositionally biased stretch (polar residues) spans 319 to 338; sequence PATSSLDYPSWIHQSSPPQT. Residues 339 to 356 are compositionally biased toward low complexity; sequence SRNSDSASDQSPSSSSED.

Requires Zn(2+) as cofactor.

It is found in the nucleus. Trans-acting factor that binds specifically to the consensus nucleotide sequence 5'-TNCGTACAA-3' of AP1 promoter. Binds specifically to the 5'-GTAC-3' core sequence. This is Squamosa promoter-binding-like protein 1 (SPL1) from Arabidopsis thaliana (Mouse-ear cress).